Consider the following 2793-residue polypeptide: Iterative polyketide synthase afoE (2793 aa).

Residues 1-401 (MTRASASGSG…PEKPSFWLTP (401 aa)) are N-terminal acylcarrier protein transacylase domain (SAT). The Nucleophile; for transacylase activity role is filled by cysteine 157. The active-site Proton donor/acceptor; for transacylase activity is histidine 279. The region spanning 435–862 (SEPIAIVGMS…GSNASMIVTQ (428 aa)) is the Ketosynthase family 3 (KS3) domain. Active-site for beta-ketoacyl synthase activity residues include cysteine 611, histidine 746, and histidine 785. A malonyl-CoA:ACP transacylase (MAT) region spans residues 977–1265 (FGGQISRFVG…SSTITVMAGR (289 aa)). An N-terminal hotdog fold region spans residues 1384–1515 (WEFVGYQDDE…ATVEMRSSSD (132 aa)). The 315-residue stretch at 1384-1698 (WEFVGYQDDE…YMRVAKASMS (315 aa)) folds into the PKS/mFAS DH domain. The segment at 1411–1696 (YVLSHVIAQT…VQYMRVAKAS (286 aa)) is product template (PT) domain. The active-site Proton acceptor; for dehydratase activity is the histidine 1415. A C-terminal hotdog fold region spans residues 1550-1698 (VEVLQGRNVY…YMRVAKASMS (149 aa)). Aspartate 1607 serves as the catalytic Proton donor; for dehydratase activity. Positions 1734-1776 (PEVRASSEPGAKVKASKTSKKEKKEKKPVTKAKSKSSKPSGWR) are disordered. Basic residues predominate over residues 1747–1769 (KASKTSKKEKKEKKPVTKAKSKS). The Carrier domain occupies 1776–1850 (RDITEEVRNL…KFVQCVSNAL (75 aa)). Serine 1810 is subject to O-(pantetheine 4'-phosphoryl)serine. Residues 1853–1903 (PNAGPAEAEDDEDEEKSDNSSSESASESDDAGSESSDTGILTPTGEEEQPL) form a disordered region. The span at 1859 to 1868 (EAEDDEDEEK) shows a compositional bias: acidic residues. Positions 2115–2294 (NLLAERIGRT…HVDWTDGNLP (180 aa)) are methyltransferase domain. A disordered region spans residues 2360 to 2379 (SRAEKESGKTQAPHAAPGRR). The NADPH-binding domain stretch occupies residues 2387-2630 (VTGATGSLGS…QWIPVDYCAA (244 aa)).

Pantetheine 4'-phosphate serves as cofactor.

The catalysed reaction is (3E,5E,7S)-5,7-dimethyl-2-oxonona-3,5-dienyl-[ACP] + 4 malonyl-CoA + AH2 + S-adenosyl-L-methionine + 3 H(+) = 6-[(3E,5E,7S)-5,7-dimethyl-2-oxonona-3,5-dienyl]-2,4-dihydroxy-3-methylbenzaldehyde + holo-[ACP] + A + S-adenosyl-L-homocysteine + 4 CO2 + 4 CoA + H2O. It participates in secondary metabolite biosynthesis. In terms of biological role, iterative polyketide synthase; part of the gene cluster that mediates the biosynthesis of asperfuranone, a probable antitumor agent. The polyketide synthase afoG is responsible for producing the 3,5-dimethyloctadienone moiety from acetyl-CoA, three malonyl-CoA, and two S-adenosyl methionines (SAM). The 3,5-dimethyloctadienone moiety is then loaded onto the SAT domain of afoE and extended with four malonyl-CoA and one SAM, which leads to the formation of 2,4-dihydroxy-6-(5,7-dimethyl-2-oxo-trans-3-trans-5-nonadienyl)-3-methylbenzaldehyde (compound 2) after reductive release and aldol condensation. AfoD is the next enzyme in the biosynthesis sequence and hydroxylates the side chain at the benzylic position of compound 2. After benzylic hydroxylation, a furan ring is formed after five-member ring hemiacetal formation and water elimination. AfoF and afoC are proposed to oxidize the R-diketone proton and to reduce the unconjugated carbonyl group, respectively, to generate asperfuranone. Since no intermediates could be isolated from afoF and afoC deletants, the sequence of these two enzymes is not fully understood. Moreover, since afoC deletant still produces a small amount of asperfuranone, other endogenous oxidoreductases might catalyze the same reaction with much less efficiency. The polypeptide is Iterative polyketide synthase afoE (Emericella nidulans (strain FGSC A4 / ATCC 38163 / CBS 112.46 / NRRL 194 / M139) (Aspergillus nidulans)).